A 517-amino-acid polypeptide reads, in one-letter code: ATP synthase subunit alpha 1 (517 aa).

176–183 (GDRQTGKT) lines the ATP pocket.

Belongs to the ATPase alpha/beta chains family. As to quaternary structure, F-type ATPases have 2 components, CF(1) - the catalytic core - and CF(0) - the membrane proton channel. CF(1) has five subunits: alpha(3), beta(3), gamma(1), delta(1), epsilon(1). CF(0) has three main subunits: a(1), b(2) and c(9-12). The alpha and beta chains form an alternating ring which encloses part of the gamma chain. CF(1) is attached to CF(0) by a central stalk formed by the gamma and epsilon chains, while a peripheral stalk is formed by the delta and b chains.

Its subcellular location is the cell inner membrane. It catalyses the reaction ATP + H2O + 4 H(+)(in) = ADP + phosphate + 5 H(+)(out). Produces ATP from ADP in the presence of a proton gradient across the membrane. The alpha chain is a regulatory subunit. In Shewanella frigidimarina (strain NCIMB 400), this protein is ATP synthase subunit alpha 1.